The sequence spans 260 residues: Neuraminyllactose-binding hemagglutinin (260 aa).

The N-terminal stretch at 1–27 (MKTNGHFKDFAWKKCFLGASVVALLVG) is a signal peptide. Cysteine 28 carries the N-palmitoyl cysteine lipid modification. Cysteine 28 carries the S-diacylglycerol cysteine lipid modification.

The protein resides in the cell outer membrane. The polypeptide is Neuraminyllactose-binding hemagglutinin (hpaA) (Helicobacter pylori (strain J99 / ATCC 700824) (Campylobacter pylori J99)).